A 121-amino-acid chain; its full sequence is Small ribosomal subunit protein uS13 (121 aa).

The interval M89–K121 is disordered.

Belongs to the universal ribosomal protein uS13 family. Part of the 30S ribosomal subunit. Forms a loose heterodimer with protein S19. Forms two bridges to the 50S subunit in the 70S ribosome.

Located at the top of the head of the 30S subunit, it contacts several helices of the 16S rRNA. In the 70S ribosome it contacts the 23S rRNA (bridge B1a) and protein L5 of the 50S subunit (bridge B1b), connecting the 2 subunits; these bridges are implicated in subunit movement. Contacts the tRNAs in the A and P-sites. The chain is Small ribosomal subunit protein uS13 from Pediococcus pentosaceus (strain ATCC 25745 / CCUG 21536 / LMG 10740 / 183-1w).